A 76-amino-acid chain; its full sequence is uncharacterized protein (76 aa).

Residues 53–70 (STKLHIIWFCIFAIFIAV) traverse the membrane as a helical segment.

Its subcellular location is the membrane. This is an uncharacterized protein from Haemophilus influenzae (strain ATCC 51907 / DSM 11121 / KW20 / Rd).